Consider the following 252-residue polypeptide: 2-succinyl-6-hydroxy-2,4-cyclohexadiene-1-carboxylate synthase (252 aa).

It belongs to the AB hydrolase superfamily. MenH family. As to quaternary structure, monomer.

It carries out the reaction 5-enolpyruvoyl-6-hydroxy-2-succinyl-cyclohex-3-ene-1-carboxylate = (1R,6R)-6-hydroxy-2-succinyl-cyclohexa-2,4-diene-1-carboxylate + pyruvate. Its pathway is quinol/quinone metabolism; 1,4-dihydroxy-2-naphthoate biosynthesis; 1,4-dihydroxy-2-naphthoate from chorismate: step 3/7. The protein operates within quinol/quinone metabolism; menaquinone biosynthesis. Catalyzes a proton abstraction reaction that results in 2,5-elimination of pyruvate from 2-succinyl-5-enolpyruvyl-6-hydroxy-3-cyclohexene-1-carboxylate (SEPHCHC) and the formation of 2-succinyl-6-hydroxy-2,4-cyclohexadiene-1-carboxylate (SHCHC). The chain is 2-succinyl-6-hydroxy-2,4-cyclohexadiene-1-carboxylate synthase from Escherichia coli O157:H7.